Consider the following 137-residue polypeptide: Putative pre-16S rRNA nuclease (137 aa).

The protein belongs to the YqgF nuclease family.

The protein resides in the cytoplasm. Could be a nuclease involved in processing of the 5'-end of pre-16S rRNA. The chain is Putative pre-16S rRNA nuclease from Chromobacterium violaceum (strain ATCC 12472 / DSM 30191 / JCM 1249 / CCUG 213 / NBRC 12614 / NCIMB 9131 / NCTC 9757 / MK).